The chain runs to 313 residues: NF-kappa-B inhibitor delta (313 aa).

ANK repeat units follow at residues 48–83, 84–113, 117–146, 152–201, 206–236, and 243–276; these read EGDT…IREH, KGKT…EPNA, QGRS…QVDL, EGLT…NHTS, SNKT…DLRT, and HGNT…DPTL.

The protein belongs to the NF-kappa-B inhibitor family. As to quaternary structure, interacts with NFKB1, RELA and RELB; in the nucleus.

Its subcellular location is the nucleus. Regulates the expression of IL-2, IL-6, and other cytokines through regulation on NF-kappa-B activity. Functions in the regulation of inflammatory responses. Involved in the induction of T helper 17 cells (Th17) differentiation upon recognition of antigen by T cell antigen receptor (TCR). May also regulate TCR-induced negative selection of thymocytes. This is NF-kappa-B inhibitor delta (NFKBID) from Homo sapiens (Human).